Here is a 198-residue protein sequence, read N- to C-terminus: Recombination protein RecR (198 aa).

The C4-type zinc-finger motif lies at 57 to 72 (CSVCGNITDEDPCEIC). The 96-residue stretch at 80–175 (EMILVVEQPK…KVTRLAHGLA (96 aa)) folds into the Toprim domain.

Belongs to the RecR family.

In terms of biological role, may play a role in DNA repair. It seems to be involved in an RecBC-independent recombinational process of DNA repair. It may act with RecF and RecO. The protein is Recombination protein RecR of Latilactobacillus sakei subsp. sakei (strain 23K) (Lactobacillus sakei subsp. sakei).